Reading from the N-terminus, the 382-residue chain is Chaperone protein DnaJ (382 aa).

The J domain maps to 5-70 (DYYEVLGVSR…DKKAAYDRYG (66 aa)). The CR-type zinc finger occupies 141 to 219 (GVQKTINVPA…CHGAGRVEKE (79 aa)). Residues C154, C157, C171, C174, C193, C196, C207, and C210 each contribute to the Zn(2+) site. CXXCXGXG motif repeat units lie at residues 154-161 (CDSCKGTG), 171-178 (CPTCSGMG), 193-200 (CPTCNGMG), and 207-214 (CKSCHGAG).

The protein belongs to the DnaJ family. As to quaternary structure, homodimer. Zn(2+) serves as cofactor.

Its subcellular location is the cytoplasm. Participates actively in the response to hyperosmotic and heat shock by preventing the aggregation of stress-denatured proteins and by disaggregating proteins, also in an autonomous, DnaK-independent fashion. Unfolded proteins bind initially to DnaJ; upon interaction with the DnaJ-bound protein, DnaK hydrolyzes its bound ATP, resulting in the formation of a stable complex. GrpE releases ADP from DnaK; ATP binding to DnaK triggers the release of the substrate protein, thus completing the reaction cycle. Several rounds of ATP-dependent interactions between DnaJ, DnaK and GrpE are required for fully efficient folding. Also involved, together with DnaK and GrpE, in the DNA replication of plasmids through activation of initiation proteins. The polypeptide is Chaperone protein DnaJ (Cereibacter sphaeroides (strain ATCC 17025 / ATH 2.4.3) (Rhodobacter sphaeroides)).